We begin with the raw amino-acid sequence, 483 residues long: Glutamyl-tRNA(Gln) amidotransferase subunit A (483 aa).

Active-site charge relay system residues include Lys76 and Ser151. The active-site Acyl-ester intermediate is the Ser175.

It belongs to the amidase family. GatA subfamily. In terms of assembly, heterotrimer of A, B and C subunits.

It catalyses the reaction L-glutamyl-tRNA(Gln) + L-glutamine + ATP + H2O = L-glutaminyl-tRNA(Gln) + L-glutamate + ADP + phosphate + H(+). In terms of biological role, allows the formation of correctly charged Gln-tRNA(Gln) through the transamidation of misacylated Glu-tRNA(Gln) in organisms which lack glutaminyl-tRNA synthetase. The reaction takes place in the presence of glutamine and ATP through an activated gamma-phospho-Glu-tRNA(Gln). The chain is Glutamyl-tRNA(Gln) amidotransferase subunit A from Pseudomonas savastanoi pv. phaseolicola (strain 1448A / Race 6) (Pseudomonas syringae pv. phaseolicola (strain 1448A / Race 6)).